The chain runs to 212 residues: Golgi SNAP receptor complex member 2 (212 aa).

At Met1 the chain carries N-acetylmethionine. Residues 1 to 190 (MEPLYQQTNK…LIEKRAFQDK (190 aa)) are Cytoplasmic-facing. Positions 60–92 (LNRRQNAKLRVDQLKYDVQHLQTALRNFQHRRQ) form a coiled coil. The short motif at 118-120 (IPM) is the IxM motif; signal for cargo packaging into COPII-coated vesicles element. A helical; Anchor for type IV membrane protein membrane pass occupies residues 191-211 (YFMIGGMLLTCAVMFLVVQYL). Residue Thr212 is a topological domain, vesicular.

This sequence belongs to the GOSR2 family. As to quaternary structure, part of a unique SNARE complex composed of the Golgi SNAREs GOSR1, STX5 and YKT6. Interacts with BET1.

The protein localises to the golgi apparatus. It localises to the cis-Golgi network membrane. Its subcellular location is the golgi apparatus membrane. It is found in the endoplasmic reticulum membrane. In terms of biological role, involved in transport of proteins from the cis/medial-Golgi to the trans-Golgi network. The chain is Golgi SNAP receptor complex member 2 (Gosr2) from Mus musculus (Mouse).